A 313-amino-acid polypeptide reads, in one-letter code: Ribosomal RNA small subunit methyltransferase H (313 aa).

S-adenosyl-L-methionine is bound by residues 35–37 (GGH), aspartate 55, phenylalanine 79, aspartate 101, and glutamine 108.

This sequence belongs to the methyltransferase superfamily. RsmH family.

It is found in the cytoplasm. It carries out the reaction cytidine(1402) in 16S rRNA + S-adenosyl-L-methionine = N(4)-methylcytidine(1402) in 16S rRNA + S-adenosyl-L-homocysteine + H(+). Functionally, specifically methylates the N4 position of cytidine in position 1402 (C1402) of 16S rRNA. The chain is Ribosomal RNA small subunit methyltransferase H from Salmonella typhi.